Consider the following 353-residue polypeptide: Protein RecA (353 aa).

64–71 (GPESSGKT) lines the ATP pocket. The disordered stretch occupies residues 331-353 (LEEASAQKEEVPVEDKLFDDELE). Over residues 335–346 (SAQKEEVPVEDK) the composition is skewed to basic and acidic residues.

The protein belongs to the RecA family.

The protein resides in the cytoplasm. Functionally, can catalyze the hydrolysis of ATP in the presence of single-stranded DNA, the ATP-dependent uptake of single-stranded DNA by duplex DNA, and the ATP-dependent hybridization of homologous single-stranded DNAs. It interacts with LexA causing its activation and leading to its autocatalytic cleavage. The protein is Protein RecA of Macrococcus caseolyticus (strain JCSC5402) (Macrococcoides caseolyticum).